Here is an 821-residue protein sequence, read N- to C-terminus: Xylosyltransferase 1 (821 aa).

The tract at residues 1 to 121 (YFSHRPKEKV…PETKSDQVPK (121 aa)) is disordered. Residues 1–821 (YFSHRPKEKV…GAVKPDGRLR (821 aa)) lie on the Lumenal side of the membrane. Residues 9–25 (KVRTDSNNENSVPKDFE) show a composition bias toward basic and acidic residues. Residues 27 to 36 (VDNSNFAPRT) are compositionally biased toward polar residues. Basic and acidic residues-rich tracts occupy residues 41–58 (HQPELAKKPLSRQKERLQ) and 76–87 (GPKEVLPPREKA). A glycan (N-linked (GlcNAc...) asparagine) is linked at N90. Cystine bridges form between C122/C150, C166/C407, C426/C439, and C428/C437. UDP-alpha-D-xylose is bound by residues V198, D226, and 255-257 (TIW). N286 carries N-linked (GlcNAc...) asparagine glycosylation. 359-360 (DW) is a binding site for UDP-alpha-D-xylose. Residues S440 and 463–464 (RK) each bind UDP-alpha-D-xylose. Cystine bridges form between C540–C789 and C782–C795. N642 is a glycosylation site (N-linked (GlcNAc...) asparagine). Residues 801–821 (SSFSPDPKSELGAVKPDGRLR) are disordered.

The protein belongs to the glycosyltransferase 14 family. XylT subfamily. Monomer. The cofactor is a divalent metal cation. Contains 7 disulfide bonds. In terms of processing, N-glycosylated.

It is found in the golgi apparatus membrane. It carries out the reaction UDP-alpha-D-xylose + L-seryl-[protein] = 3-O-(beta-D-xylosyl)-L-seryl-[protein] + UDP + H(+). It participates in glycan metabolism; chondroitin sulfate biosynthesis. It functions in the pathway glycan metabolism; heparan sulfate biosynthesis. Functionally, catalyzes the first step in the biosynthesis of chondroitin sulfate and dermatan sulfate proteoglycans, such as DCN. Transfers D-xylose from UDP-D-xylose to specific serine residues of the core protein. Required for normal maturation of chondrocytes during bone development, normal onset of ossification and normal embryonic and postnatal skeleton development, especially of the long bones. The chain is Xylosyltransferase 1 (Xylt1) from Rattus norvegicus (Rat).